Reading from the N-terminus, the 207-residue chain is Large ribosomal subunit protein uL4 (207 aa).

The segment at 45–78 (RQGTHAVKNRSARRGGGRKPWRQKGTGRARQGSI) is disordered. Residues 51 to 71 (VKNRSARRGGGRKPWRQKGTG) show a composition bias toward basic residues.

It belongs to the universal ribosomal protein uL4 family. In terms of assembly, part of the 50S ribosomal subunit.

Functionally, one of the primary rRNA binding proteins, this protein initially binds near the 5'-end of the 23S rRNA. It is important during the early stages of 50S assembly. It makes multiple contacts with different domains of the 23S rRNA in the assembled 50S subunit and ribosome. Its function is as follows. Forms part of the polypeptide exit tunnel. The polypeptide is Large ribosomal subunit protein uL4 (Lactiplantibacillus plantarum (strain ATCC BAA-793 / NCIMB 8826 / WCFS1) (Lactobacillus plantarum)).